The following is a 520-amino-acid chain: 2-isopropylmalate synthase (520 aa).

The Pyruvate carboxyltransferase domain maps to 5 to 268 (VYIFDTTLRD…YTDVNTKEIY (264 aa)). Residues aspartate 14, histidine 202, histidine 204, and asparagine 238 each contribute to the Mn(2+) site. The segment at 394–520 (KVLHFQVQSG…RQEIREEGTV (127 aa)) is regulatory domain.

This sequence belongs to the alpha-IPM synthase/homocitrate synthase family. LeuA type 1 subfamily. In terms of assembly, homodimer. The cofactor is Mn(2+).

The protein localises to the cytoplasm. It catalyses the reaction 3-methyl-2-oxobutanoate + acetyl-CoA + H2O = (2S)-2-isopropylmalate + CoA + H(+). It functions in the pathway amino-acid biosynthesis; L-leucine biosynthesis; L-leucine from 3-methyl-2-oxobutanoate: step 1/4. Its function is as follows. Catalyzes the condensation of the acetyl group of acetyl-CoA with 3-methyl-2-oxobutanoate (2-ketoisovalerate) to form 3-carboxy-3-hydroxy-4-methylpentanoate (2-isopropylmalate). This chain is 2-isopropylmalate synthase, found in Aquifex aeolicus (strain VF5).